Here is a 389-residue protein sequence, read N- to C-terminus: Probable peptidoglycan glycosyltransferase FtsW (389 aa).

The Cytoplasmic portion of the chain corresponds to 1–14 (MPIRDWRQQSQRWP). Residues 15 to 35 (IDYWLIGALAILITLGLTMVA) traverse the membrane as a helical segment. Residues 36–57 (SSSIAISEKRFGDPTHYLLRQM) are Periplasmic-facing. The chain crosses the membrane as a helical span at residues 58 to 78 (FSMGLGLMAAYIVLKIPLSFW). At 79–84 (RKHRGQ) the chain is on the cytoplasmic side. The helical transmembrane segment at 85 to 105 (LFIVGLVLLVLVLVFGREING) threads the bilayer. Over 106–111 (SKRWLP) the chain is Periplasmic. Residues 112 to 132 (LVLMNFQVSEFMKIAVVVFMA) traverse the membrane as a helical segment. The Cytoplasmic portion of the chain corresponds to 133–144 (GYLDRHATAVRE). A helical transmembrane segment spans residues 145–165 (SFEAVIRLALPFGVMAILLLL). The Periplasmic segment spans residues 166–168 (EPD). The chain crosses the membrane as a helical span at residues 169-189 (FGSTFVIAVIITGMLLIAGAP). Topologically, residues 190–191 (WR) are cytoplasmic. Residues 192–212 (FFVMTVLPIATLLVMMVITSP) traverse the membrane as a helical segment. At 213-268 (YRMARVTNFLDPWSDPFGNGYQLTQALIASGRGEWFGVGIGESVQKLLYLPDAHTD) the chain is on the periplasmic side. Residues 269 to 289 (FLFSIYAEEYGLIGVAFLALL) traverse the membrane as a helical segment. At 290–310 (YLTLLYRCFRIGRKAFNQTHY) the chain is on the cytoplasmic side. A helical transmembrane segment spans residues 311 to 331 (FGGLIAYGVGIWIVLQAMINM). Residues 332-344 (GVNLGLFPTKGLT) are Periplasmic-facing. A helical membrane pass occupies residues 345–365 (LPFMSYGGSSVLMLFIGVAMV). At 366–389 (LRVDLETRQAVLEHSVDESGQGKR) the chain is on the cytoplasmic side.

The protein belongs to the SEDS family. FtsW subfamily.

It localises to the cell inner membrane. The catalysed reaction is [GlcNAc-(1-&gt;4)-Mur2Ac(oyl-L-Ala-gamma-D-Glu-L-Lys-D-Ala-D-Ala)](n)-di-trans,octa-cis-undecaprenyl diphosphate + beta-D-GlcNAc-(1-&gt;4)-Mur2Ac(oyl-L-Ala-gamma-D-Glu-L-Lys-D-Ala-D-Ala)-di-trans,octa-cis-undecaprenyl diphosphate = [GlcNAc-(1-&gt;4)-Mur2Ac(oyl-L-Ala-gamma-D-Glu-L-Lys-D-Ala-D-Ala)](n+1)-di-trans,octa-cis-undecaprenyl diphosphate + di-trans,octa-cis-undecaprenyl diphosphate + H(+). The protein operates within cell wall biogenesis; peptidoglycan biosynthesis. Peptidoglycan polymerase that is essential for cell division. The sequence is that of Probable peptidoglycan glycosyltransferase FtsW from Hydrogenovibrio crunogenus (strain DSM 25203 / XCL-2) (Thiomicrospira crunogena).